We begin with the raw amino-acid sequence, 259 residues long: 3'-5' ssDNA/RNA exonuclease TatD (259 aa).

Residues Glu92, His128, and His153 each coordinate a divalent metal cation.

Belongs to the metallo-dependent hydrolases superfamily. TatD-type hydrolase family. TatD subfamily. As to quaternary structure, monomer. It depends on Mg(2+) as a cofactor.

The protein resides in the cytoplasm. Functionally, 3'-5' exonuclease that prefers single-stranded DNA and RNA. May play a role in the H(2)O(2)-induced DNA damage repair. The protein is 3'-5' ssDNA/RNA exonuclease TatD of Erwinia amylovora (strain ATCC 49946 / CCPPB 0273 / Ea273 / 27-3).